We begin with the raw amino-acid sequence, 181 residues long: MENTQENPATPSAEDIGSEKQAAQGAAPAAEAADAALAEAQAKVAELQESFLRAKAETENVRRRAQDDVSKAHKFAIESFAEHLLPVLDSLEAAVSDTSGDIAKVREGVELTLRQLTSALEKGRVVAINPVGEKFDPHQHQAISMVPAEQEPNTVVTVLQKGYMIADRVLRPALVTVAQSK.

The segment covering 1–10 (MENTQENPAT) has biased composition (polar residues). The segment at 1-33 (MENTQENPATPSAEDIGSEKQAAQGAAPAAEAA) is disordered. Residues 21–33 (QAAQGAAPAAEAA) are compositionally biased toward low complexity.

This sequence belongs to the GrpE family. Homodimer.

It localises to the cytoplasm. Participates actively in the response to hyperosmotic and heat shock by preventing the aggregation of stress-denatured proteins, in association with DnaK and GrpE. It is the nucleotide exchange factor for DnaK and may function as a thermosensor. Unfolded proteins bind initially to DnaJ; upon interaction with the DnaJ-bound protein, DnaK hydrolyzes its bound ATP, resulting in the formation of a stable complex. GrpE releases ADP from DnaK; ATP binding to DnaK triggers the release of the substrate protein, thus completing the reaction cycle. Several rounds of ATP-dependent interactions between DnaJ, DnaK and GrpE are required for fully efficient folding. The chain is Protein GrpE from Burkholderia cenocepacia (strain ATCC BAA-245 / DSM 16553 / LMG 16656 / NCTC 13227 / J2315 / CF5610) (Burkholderia cepacia (strain J2315)).